Here is a 457-residue protein sequence, read N- to C-terminus: Multidrug resistance protein MdtK (457 aa).

Transmembrane regions (helical) follow at residues 11 to 31 (LLALAIPVIFAQIAQTSMGVV), 53 to 73 (IWLPAILFGHGLLLALTPVIA), 93 to 113 (VLAGLVSVLIMLVLWNAGYII), 127 to 147 (AVNYLRALLWGAPGYLFFQVM), 160 to 180 (GMAMGFIGLLVNIPVNYIFIY), 188 to 208 (LGGVGCGVATASVYWVMFFCM), 243 to 263 (MPVALALFFEVTLFAVVALLV), 276 to 296 (IALNFSSLMFVLPMSMSAAVT), 316 to 336 (RTGIIVGICLAVLTALFTVVF), 357 to 377 (LMLLAAIYQISDSIQVIGSGV), 387 to 407 (IFFITFIAYWVLGLPSGYILG), and 418 to 438 (PAGFWFGFILGLTSAAIMMMW).

The protein belongs to the multi antimicrobial extrusion (MATE) (TC 2.A.66.1) family. MdtK subfamily.

Its subcellular location is the cell inner membrane. Multidrug efflux pump that functions probably as a Na(+)/drug antiporter. The sequence is that of Multidrug resistance protein MdtK from Cronobacter sakazakii (strain ATCC BAA-894) (Enterobacter sakazakii).